The following is a 621-amino-acid chain: Glutathione-regulated potassium-efflux system protein KefC (621 aa).

12 consecutive transmembrane segments (helical) span residues His-4–Val-24, Leu-26–Leu-46, Ala-54–Leu-74, Gly-90–Leu-110, Val-114–Met-134, Phe-149–Leu-169, Leu-178–Leu-198, Val-218–Gly-238, Gly-270–Val-290, Leu-294–Ile-314, Arg-326–Ala-346, and Ala-359–Thr-379. Residues Gln-399–Thr-518 enclose the RCK N-terminal domain. Residues Gly-598–Ala-621 are disordered.

The protein belongs to the monovalent cation:proton antiporter 2 (CPA2) transporter (TC 2.A.37) family. KefC subfamily. Homodimer. Interacts with the regulatory subunit KefF.

It is found in the cell inner membrane. Its function is as follows. Pore-forming subunit of a potassium efflux system that confers protection against electrophiles. Catalyzes K(+)/H(+) antiport. The sequence is that of Glutathione-regulated potassium-efflux system protein KefC from Klebsiella pneumoniae (strain 342).